The following is a 342-amino-acid chain: Holliday junction branch migration complex subunit RuvB (342 aa).

A large ATPase domain (RuvB-L) region spans residues 1-185; it reads MTVKPLRDVT…FPIQERLEYY (185 aa). ATP contacts are provided by residues Leu-24, Arg-25, Gly-66, Lys-69, Thr-70, Ser-71, 132–134, Arg-175, Tyr-185, and Arg-222; that span reads EDY. Thr-70 lines the Mg(2+) pocket. The tract at residues 186–256 is small ATPAse domain (RuvB-S); the sequence is GPAELKEIAV…VVDRTLRRLE (71 aa). The head domain (RuvB-H) stretch occupies residues 259 to 342; sequence ARGLDAMDRR…RPGGKQGSLV (84 aa). DNA is bound by residues Arg-314 and Arg-319.

The protein belongs to the RuvB family. Homohexamer. Forms an RuvA(8)-RuvB(12)-Holliday junction (HJ) complex. HJ DNA is sandwiched between 2 RuvA tetramers; dsDNA enters through RuvA and exits via RuvB. An RuvB hexamer assembles on each DNA strand where it exits the tetramer. Each RuvB hexamer is contacted by two RuvA subunits (via domain III) on 2 adjacent RuvB subunits; this complex drives branch migration. In the full resolvosome a probable DNA-RuvA(4)-RuvB(12)-RuvC(2) complex forms which resolves the HJ.

Its subcellular location is the cytoplasm. The enzyme catalyses ATP + H2O = ADP + phosphate + H(+). In terms of biological role, the RuvA-RuvB-RuvC complex processes Holliday junction (HJ) DNA during genetic recombination and DNA repair, while the RuvA-RuvB complex plays an important role in the rescue of blocked DNA replication forks via replication fork reversal (RFR). RuvA specifically binds to HJ cruciform DNA, conferring on it an open structure. The RuvB hexamer acts as an ATP-dependent pump, pulling dsDNA into and through the RuvAB complex. RuvB forms 2 homohexamers on either side of HJ DNA bound by 1 or 2 RuvA tetramers; 4 subunits per hexamer contact DNA at a time. Coordinated motions by a converter formed by DNA-disengaged RuvB subunits stimulates ATP hydrolysis and nucleotide exchange. Immobilization of the converter enables RuvB to convert the ATP-contained energy into a lever motion, pulling 2 nucleotides of DNA out of the RuvA tetramer per ATP hydrolyzed, thus driving DNA branch migration. The RuvB motors rotate together with the DNA substrate, which together with the progressing nucleotide cycle form the mechanistic basis for DNA recombination by continuous HJ branch migration. Branch migration allows RuvC to scan DNA until it finds its consensus sequence, where it cleaves and resolves cruciform DNA. This is Holliday junction branch migration complex subunit RuvB from Anaeromyxobacter sp. (strain K).